A 426-amino-acid polypeptide reads, in one-letter code: Histidine--tRNA ligase 1 (426 aa).

The protein belongs to the class-II aminoacyl-tRNA synthetase family. As to quaternary structure, homodimer.

The protein localises to the cytoplasm. The catalysed reaction is tRNA(His) + L-histidine + ATP = L-histidyl-tRNA(His) + AMP + diphosphate + H(+). The chain is Histidine--tRNA ligase 1 from Bacillus cereus (strain ATCC 14579 / DSM 31 / CCUG 7414 / JCM 2152 / NBRC 15305 / NCIMB 9373 / NCTC 2599 / NRRL B-3711).